A 1163-amino-acid chain; its full sequence is Reticulon-4 (1163 aa).

N-acetylmethionine is present on methionine 1. 2 disordered regions span residues 1 to 184 (MEDI…AASE) and 244 to 270 (SAVS…RATN). The Cytoplasmic segment spans residues 1-989 (MEDIDQSSLV…LYWRDIKKTG (989 aa)). Serine 7 and serine 16 each carry phosphoserine. Positions 7 to 16 (SSLVSSSTDS) are enriched in low complexity. Positions 31–55 (EPEDEEDEEEEEDEEEDDEDLEELE) are enriched in acidic residues. A compositionally biased stretch (low complexity) spans 62–79 (AAGLSAAAVPPAAAAPLL). The span at 87–101 (PPAPRGPLPAAPPAA) shows a compositional bias: pro residues. Serine 107 carries the phosphoserine modification. Over residues 138-147 (ARPPPPPPAG) the composition is skewed to pro residues. 3 positions are modified to phosphoserine: serine 149, serine 169, and serine 171. Phosphoserine occurs at positions 329, 333, and 343. Position 347 is a phosphothreonine (threonine 347). A compositionally biased stretch (basic and acidic residues) spans 406–423 (DSLEQKSLGKDSEGRNED). Disordered regions lie at residues 406 to 437 (DSLE…KDSS) and 454 to 474 (TANT…DEKK). Residue serine 425 is modified to Phosphoserine. Residue threonine 429 is modified to Phosphothreonine. The span at 461–474 (LEDHTSENKTDEKK) shows a compositional bias: basic and acidic residues. Phosphoserine occurs at positions 488, 689, 726, 766, and 830. Position 832 is a phosphothreonine (threonine 832). Residues serine 855, serine 922, and serine 962 each carry the phosphoserine modification. The Reticulon domain maps to 976 to 1163 (VVDLLYWRDI…KIPGLKRKAD (188 aa)). The helical transmembrane segment at 990 to 1010 (VVFGASLFLLLSLTVFSIVSV) threads the bilayer. The Lumenal portion of the chain corresponds to 1011-1104 (TAYIALALLS…LMWVFTYVGA (94 aa)). An N6-acetyllysine modification is found at lysine 1075. Residues 1105 to 1125 (LFNGLTLLILALISLFSIPVI) traverse the membrane as a helical segment. The Cytoplasmic segment spans residues 1126–1163 (YERHQVQIDHYLGLANKSVKDAMAKIQAKIPGLKRKAD).

Binds to RTN4R. Interacts with ATL1. Interacts with TMEM170A. Interacts with RTN4IP1. As to quaternary structure, interacts in trans with CNTNAP1. Interacts with REEP5. Interacts with synaptic plasticity regulator PANTS; the interaction results in enhanced RTN4-mediated inhibition of AMPA receptor clustering. Interacts with GPR50. In terms of assembly, homodimer. Interacts with BAD/Bcl-xl and BCL2. Interact with RTN3. Interacts with NGBR. Interacts with SPTLC1. Interacts with GRAMD4. Interacts with CDH5. Interacts with BACE1 and BACE2. Interacts with REEP5. Interacts with RETREG3. Interacts with BACE1 and BACE2. Interacts with TMEM33. As to expression, isoforms A, B and C are present in optic nerve, spinal cord and cerebral cortex. Isoforms A and B are present in dorsal root ganglion, sciatic nerve and PC12 cells after longer exposure. Isoforms B and C are detected in kidney, cartilage, skin, lung and spleen. Isoform C is expressed at high level in skeletal muscle. In adult animals isoform A is expressed mainly in the nervous system.

It is found in the endoplasmic reticulum membrane. Its subcellular location is the cell membrane. It localises to the synapse. The protein resides in the cell junction. In terms of biological role, required to induce the formation and stabilization of endoplasmic reticulum (ER) tubules. They regulate membrane morphogenesis in the ER by promoting tubular ER production. They influence nuclear envelope expansion, nuclear pore complex formation and proper localization of inner nuclear membrane proteins. However each isoform have specific functions mainly depending on their tissue expression specificities. Its function is as follows. Developmental neurite growth regulatory factor with a role as a negative regulator of axon-axon adhesion and growth, and as a facilitator of neurite branching. Regulates neurite fasciculation, branching and extension in the developing nervous system. Involved in down-regulation of growth, stabilization of wiring and restriction of plasticity in the adult CNS. Regulates the radial migration of cortical neurons via an RTN4R-LINGO1 containing receptor complex. Acts as a negative regulator of central nervous system angiogenesis. Inhibits spreading, migration and sprouting of primary brain microvascular endothelial cells (MVECs). Also induces the retraction of MVECs lamellipodia and filopodia in a ROCK pathway-dependent manner. Mainly function in endothelial cells and vascular smooth muscle cells, is also involved in immune system regulation. Modulator of vascular remodeling, promotes the migration of endothelial cells but inhibits the migration of vascular smooth muscle cells. Regulates endothelial sphingolipid biosynthesis with direct effects on vascular function and blood pressure. Inhibits serine palmitoyltransferase, SPTLC1, the rate-limiting enzyme of the novo sphingolipid biosynthetic pathway, thereby controlling production of endothelial sphingosine-1-phosphate (S1P). Required to promote macrophage homing and functions such as cytokine/chemokine gene expression involved in angiogenesis, arteriogenesis and tissue repair. Mediates ICAM1 induced transendothelial migration of leukocytes such as monocytes and neutrophils and acute inflammation. Necessary for immune responses triggered by nucleic acid sensing TLRs, such as TLR9, is required for proper TLR9 location to endolysosomes. Also involved in immune response to LPS. Plays a role in liver regeneration through the modulation of hepatocytes proliferation. Reduces the anti-apoptotic activity of Bcl-xl and Bcl-2. This is likely consecutive to their change in subcellular location, from the mitochondria to the endoplasmic reticulum, after binding and sequestration. With isoform C, inhibits BACE1 activity and amyloid precursor protein processing. Functionally, regulates cardiomyocyte apoptosis upon hypoxic conditions. With isoform B, inhibits BACE1 activity and amyloid precursor protein processing. This Rattus norvegicus (Rat) protein is Reticulon-4 (Rtn4).